Consider the following 200-residue polypeptide: Lipopolysaccharide core heptose(II)-phosphate phosphatase (200 aa).

Residues 1–25 (MLAFCRSSLKSKKYFIILLALAAIA) form the signal peptide.

Belongs to the phosphoglycerate mutase family. Ais subfamily.

It is found in the periplasm. It participates in bacterial outer membrane biogenesis; lipopolysaccharide metabolism. Its function is as follows. Catalyzes the dephosphorylation of heptose(II) of the outer membrane lipopolysaccharide core. The chain is Lipopolysaccharide core heptose(II)-phosphate phosphatase from Shigella flexneri serotype 5b (strain 8401).